The primary structure comprises 234 residues: MSLPIIKVHWLDHSRAFRLLWLLDHLNLEYEIVPYKRDANFRAPPELKKIHPLGRSPLLEVQDRETGKKKILAESGFIFQYVLQHFDHSHVLMSEDADIADQINYYLFYVEGSLQPPLMIEFILSKVKDSGMPFPISYLARKVADKISQAYSSGEVKNQFDFVEGEISKNNGYLVDGKLSGADILMSFPLQMAFERKFAAPEDYPAISKWLKTITSEESYAASKEKARALGSNF.

Residues leucine 3–histidine 90 form the GST N-terminal domain. The 139-residue stretch at aspartate 96–phenylalanine 234 folds into the GST C-terminal domain.

The protein belongs to the GST superfamily. Homodimer.

It localises to the endoplasmic reticulum membrane. It carries out the reaction RX + glutathione = an S-substituted glutathione + a halide anion + H(+). The protein is Glutathione S-transferase 1 (GTT1) of Saccharomyces cerevisiae (strain ATCC 204508 / S288c) (Baker's yeast).